A 557-amino-acid polypeptide reads, in one-letter code: Urocanate hydratase (557 aa).

NAD(+) contacts are provided by residues 53–54, Q131, 177–179, E197, R202, 243–244, 264–268, 274–275, and Y323; these read GG, GMG, NA, QTSAH, and YL. Residue C411 is part of the active site. The segment at 445–464 is disordered; that stretch reads LDSGSVSSPNRETESMRDGS. Over residues 455-464 the composition is skewed to basic and acidic residues; the sequence is RETESMRDGS. An NAD(+)-binding site is contributed by G493.

The protein belongs to the urocanase family. Requires NAD(+) as cofactor.

The protein resides in the cytoplasm. The enzyme catalyses 4-imidazolone-5-propanoate = trans-urocanate + H2O. It functions in the pathway amino-acid degradation; L-histidine degradation into L-glutamate; N-formimidoyl-L-glutamate from L-histidine: step 2/3. In terms of biological role, catalyzes the conversion of urocanate to 4-imidazolone-5-propionate. The polypeptide is Urocanate hydratase (Pseudomonas putida (strain W619)).